Consider the following 245-residue polypeptide: UPF0246 protein CE1889 (245 aa).

The segment at 1-20 (MLILLPPSETKTPGGAGAPL) is disordered.

It belongs to the UPF0246 family.

The protein is UPF0246 protein CE1889 of Corynebacterium efficiens (strain DSM 44549 / YS-314 / AJ 12310 / JCM 11189 / NBRC 100395).